The sequence spans 476 residues: Ankyrin repeat, SAM and basic leucine zipper domain-containing protein 1 (476 aa).

Phosphoserine occurs at positions 18 and 21. ANK repeat units lie at residues 46-75 (EKNE…SIDS), 79-108 (YGWT…NASF), 111-145 (DKQT…DPNV), 149-178 (RLMT…EVNT), 182-211 (NGYT…DKML), and 215-244 (DGKT…PLEG). The 63-residue stretch at 273–335 (SYAAFEDLEI…KILAALKELE (63 aa)) folds into the SAM domain.

Interacts with DDX4, PIWIL1, RANBP9 and TDRD1.

It is found in the cytoplasm. Plays a central role during spermatogenesis by repressing transposable elements and preventing their mobilization, which is essential for the germline integrity. Acts via the piRNA metabolic process, which mediates the repression of transposable elements during meiosis by forming complexes composed of piRNAs and Piwi proteins and governs the methylation and subsequent repression of transposons. Its association with pi-bodies suggests a participation in the primary piRNAs metabolic process. Required prior to the pachytene stage to facilitate the production of multiple types of piRNAs, including those associated with repeats involved in the regulation of retrotransposons. May act by mediating protein-protein interactions during germ cell maturation. In Dasypus novemcinctus (Nine-banded armadillo), this protein is Ankyrin repeat, SAM and basic leucine zipper domain-containing protein 1 (ASZ1).